Consider the following 346-residue polypeptide: Glucose-6-phosphatase 3 (346 aa).

Topologically, residues M1–N24 are lumenal. A helical transmembrane segment spans residues M25 to A45. At A46–S56 the chain is on the cytoplasmic side. A helical transmembrane segment spans residues V57–G77. The Lumenal portion of the chain corresponds to D78 to P108. R79 is a substrate binding site. The chain crosses the membrane as a helical span at residues G109–I129. Residue H114 is the Proton donor of the active site. The Cytoplasmic portion of the chain corresponds to S130–R138. The chain crosses the membrane as a helical span at residues S139 to L159. At S160–H167 the chain is on the lumenal side. A substrate-binding site is contributed by R161. The Nucleophile role is filled by H167. Residues F168–M186 traverse the membrane as a helical segment. The Cytoplasmic portion of the chain corresponds to S187–S197. Residues F198–F218 form a helical membrane-spanning segment. Residues T219–D254 are Lumenal-facing. A helical transmembrane segment spans residues S255–I273. At R274–K283 the chain is on the cytoplasmic side. A helical transmembrane segment spans residues I284–P304. At Q305–S307 the chain is on the lumenal side. Residues L308–V328 form a helical membrane-spanning segment. Residues P329–S346 are Cytoplasmic-facing.

The protein belongs to the glucose-6-phosphatase family. In terms of tissue distribution, widely expressed. Highly expressed in heart and testis and to a lower extent in spleen, stomach, small intestine, skeletal muscle and uterus. Expressed in muscle, brain, thymus, lung, kidney, spleen and pancreas (at protein level). In the brain, expressed in astrocytes (at protein level).

The protein localises to the endoplasmic reticulum membrane. It catalyses the reaction D-glucose 6-phosphate + H2O = D-glucose + phosphate. Its pathway is carbohydrate biosynthesis; gluconeogenesis. Inhibited by vanadate. In terms of biological role, hydrolyzes glucose-6-phosphate to glucose in the endoplasmic reticulum. May form with the glucose-6-phosphate transporter (SLC37A4/G6PT) a ubiquitously expressed complex responsible for glucose production through glycogenolysis and gluconeogenesis. Probably required for normal neutrophil function. The sequence is that of Glucose-6-phosphatase 3 (G6pc3) from Mus musculus (Mouse).